Reading from the N-terminus, the 153-residue chain is LOB domain-containing protein 26 (153 aa).

The LOB domain maps to 4-105 (NPCEVCRFQN…EEVSKTKKLL (102 aa)). The disordered stretch occupies residues 126–153 (KSKPSVLRKRKRKTKSSDESAIRVVEDS). Positions 140–153 (KSSDESAIRVVEDS) are enriched in basic and acidic residues.

The protein belongs to the LOB domain-containing protein family.

This chain is LOB domain-containing protein 26 (LBD26), found in Arabidopsis thaliana (Mouse-ear cress).